We begin with the raw amino-acid sequence, 312 residues long: Adenylyl-sulfate kinase, chloroplastic (312 aa).

142–149 (GLSGSGKS) contributes to the ATP binding site. Residue Ser216 is the Phosphoserine intermediate of the active site.

It belongs to the APS kinase family.

The protein localises to the plastid. It localises to the chloroplast. It catalyses the reaction adenosine 5'-phosphosulfate + ATP = 3'-phosphoadenylyl sulfate + ADP + H(+). It participates in sulfur metabolism; hydrogen sulfide biosynthesis; sulfite from sulfate: step 2/3. Functionally, catalyzes the synthesis of activated sulfate. The polypeptide is Adenylyl-sulfate kinase, chloroplastic (AKN) (Catharanthus roseus (Madagascar periwinkle)).